Here is a 242-residue protein sequence, read N- to C-terminus: Large ribosomal subunit protein uL1 (242 aa).

This sequence belongs to the universal ribosomal protein uL1 family. As to quaternary structure, part of the 50S ribosomal subunit.

Functionally, binds directly to 23S rRNA. The L1 stalk is quite mobile in the ribosome, and is involved in E site tRNA release. Protein L1 is also a translational repressor protein, it controls the translation of the L11 operon by binding to its mRNA. The protein is Large ribosomal subunit protein uL1 of Dictyoglomus turgidum (strain DSM 6724 / Z-1310).